A 731-amino-acid polypeptide reads, in one-letter code: Bifunctional trehalose-6-phosphate synthase/phosphatase (731 aa).

Positions 1 to 464 (MRLIVVSNRL…WGTDFIYSLI (464 aa)) are alpha,alpha-trehalose-phosphate synthase. A D-glucose 6-phosphate-binding site is contributed by arginine 9. Position 25-26 (25-26 (GG)) interacts with UDP-alpha-D-glucose. D-glucose 6-phosphate-binding residues include tyrosine 89 and aspartate 143. UDP-alpha-D-glucose-binding residues include arginine 276 and lysine 281. Position 314 (arginine 314) interacts with D-glucose 6-phosphate. A UDP-alpha-D-glucose-binding site is contributed by 379 to 383 (LVAKE). Residues 465 to 731 (SAKSAREEVE…RSLLEQLRPP (267 aa)) are trehalose-6-phosphate phosphatase. Catalysis depends on aspartate 503, which acts as the Nucleophile. Residues aspartate 503, aspartate 505, and aspartate 684 each contribute to the Mg(2+) site. 503 to 505 (DYD) lines the alpha,alpha-trehalose 6-phosphate pocket.

The protein in the N-terminal section; belongs to the glycosyltransferase 20 family. In the C-terminal section; belongs to the trehalose phosphatase family. May interact with the putative glycosyltransferase (GT) TTX_1305. TTX_1305 is required for the trehalose-6-phosphate synthase activity of tpsp. Mg(2+) is required as a cofactor.

It catalyses the reaction D-glucose 6-phosphate + UDP-alpha-D-glucose = alpha,alpha-trehalose 6-phosphate + UDP + H(+). It carries out the reaction alpha,alpha-trehalose 6-phosphate + H2O = alpha,alpha-trehalose + phosphate. It participates in glycan biosynthesis; trehalose biosynthesis. Functionally, bifunctional enzyme which catalyzes the transfer of glucose from UDP-alpha-D-glucose to glucose-6-phosphate to form trehalose-6-phosphate (Tre6P) and removes the phosphate from Tre6P to produce free trehalose. In Thermoproteus tenax (strain ATCC 35583 / DSM 2078 / JCM 9277 / NBRC 100435 / Kra 1), this protein is Bifunctional trehalose-6-phosphate synthase/phosphatase.